The following is a 273-amino-acid chain: Large ribosomal subunit protein uL2 (273 aa).

The tract at residues 213–261 (WLGKRPQSRGVAMNPVDHPHGGGEGKSSGGRHPVTPWGVPTKGYKTRVN) is disordered.

It belongs to the universal ribosomal protein uL2 family. Part of the 50S ribosomal subunit. Forms a bridge to the 30S subunit in the 70S ribosome.

One of the primary rRNA binding proteins. Required for association of the 30S and 50S subunits to form the 70S ribosome, for tRNA binding and peptide bond formation. It has been suggested to have peptidyltransferase activity; this is somewhat controversial. Makes several contacts with the 16S rRNA in the 70S ribosome. The polypeptide is Large ribosomal subunit protein uL2 (Syntrophotalea carbinolica (strain DSM 2380 / NBRC 103641 / GraBd1) (Pelobacter carbinolicus)).